A 321-amino-acid chain; its full sequence is Epiphycan (321 aa).

Positions 1–19 are cleaved as a signal peptide; sequence MKALARLIVGLLILDAAVT. O-linked (GalNAc...) threonine glycosylation is present at T60. Residue S64 is glycosylated (O-linked (Xyl...) (dermatan sulfate) serine). The disordered stretch occupies residues 64–100; it reads SGNRELLTPPPQPEEAEEEEEEESTPRLIDGSSPQEP. A compositionally biased stretch (acidic residues) spans 77–86; it reads EEAEEEEEEE. The O-linked (GalNAc...) serine glycan is linked to S95. Residues 105 to 142 form the LRRNT domain; that stretch reads VLGPQTNEDFPTCLLCTCISTTVYCDDHELDAIPPLPK. C117 and C129 are oxidised to a cystine. 5 LRR repeats span residues 143–164, 167–188, 191–212, 237–257, and 258–279; these read NTAY…DFAS, DLRR…AFRK, QLRE…PTTL, DLHH…PLPE, and NLRA…TFCN. A disulfide bridge connects residues C278 and C311. The N-linked (GlcNAc...) asparagine glycan is linked to N282. Residues 289–309 form an LRR 6 repeat; the sequence is ALEDIRLDGNPINLSKTPQAY.

The protein belongs to the small leucine-rich proteoglycan (SLRP) family. SLRP class III subfamily. A long and a short form present in approximately equimolar amounts may arise by proteolysis or cleavage by exopeptidases. Post-translationally, the O-linked polysaccharides on Thr-60 and Ser-95 are probably the mucin type linked to GalNAc. There is one glycosaminoglycan chain, known to be dermatan sulfate, and it is probably the O-glycosylation at Ser-64. As to expression, preferentially expressed in the zone of flattened chondrocytes of the developing limb cartilage.

The protein localises to the secreted. Its subcellular location is the extracellular space. The protein resides in the extracellular matrix. In terms of biological role, may have a role in bone formation and also in establishing the ordered structure of cartilage through matrix organization. This Bos taurus (Bovine) protein is Epiphycan (EPYC).